Here is an 892-residue protein sequence, read N- to C-terminus: Alanine--tRNA ligase (892 aa).

Zn(2+) is bound by residues H577, H581, C680, and H684.

Belongs to the class-II aminoacyl-tRNA synthetase family. Zn(2+) serves as cofactor.

Its subcellular location is the cytoplasm. It catalyses the reaction tRNA(Ala) + L-alanine + ATP = L-alanyl-tRNA(Ala) + AMP + diphosphate. Catalyzes the attachment of alanine to tRNA(Ala) in a two-step reaction: alanine is first activated by ATP to form Ala-AMP and then transferred to the acceptor end of tRNA(Ala). Also edits incorrectly charged Ser-tRNA(Ala) and Gly-tRNA(Ala) via its editing domain. In Paenarthrobacter aurescens (strain TC1), this protein is Alanine--tRNA ligase.